The primary structure comprises 279 residues: Pantothenate synthetase (279 aa).

26-33 (MGNLHEGH) is an ATP binding site. His33 serves as the catalytic Proton donor. Gln57 is a (R)-pantoate binding site. Position 57 (Gln57) interacts with beta-alanine. 144 to 147 (GKKD) provides a ligand contact to ATP. Residue Gln150 participates in (R)-pantoate binding. ATP is bound by residues Val173 and 181-184 (LSSR).

The protein belongs to the pantothenate synthetase family. In terms of assembly, homodimer.

The protein resides in the cytoplasm. It carries out the reaction (R)-pantoate + beta-alanine + ATP = (R)-pantothenate + AMP + diphosphate + H(+). It functions in the pathway cofactor biosynthesis; (R)-pantothenate biosynthesis; (R)-pantothenate from (R)-pantoate and beta-alanine: step 1/1. Catalyzes the condensation of pantoate with beta-alanine in an ATP-dependent reaction via a pantoyl-adenylate intermediate. This Burkholderia vietnamiensis (strain G4 / LMG 22486) (Burkholderia cepacia (strain R1808)) protein is Pantothenate synthetase.